Consider the following 469-residue polypeptide: 3-isopropylmalate dehydratase large subunit (469 aa).

Positions 347, 410, and 413 each coordinate [4Fe-4S] cluster.

This sequence belongs to the aconitase/IPM isomerase family. LeuC type 1 subfamily. As to quaternary structure, heterodimer of LeuC and LeuD. It depends on [4Fe-4S] cluster as a cofactor.

It catalyses the reaction (2R,3S)-3-isopropylmalate = (2S)-2-isopropylmalate. The protein operates within amino-acid biosynthesis; L-leucine biosynthesis; L-leucine from 3-methyl-2-oxobutanoate: step 2/4. Its function is as follows. Catalyzes the isomerization between 2-isopropylmalate and 3-isopropylmalate, via the formation of 2-isopropylmaleate. This chain is 3-isopropylmalate dehydratase large subunit, found in Cupriavidus pinatubonensis (strain JMP 134 / LMG 1197) (Cupriavidus necator (strain JMP 134)).